A 674-amino-acid chain; its full sequence is DNA ligase (674 aa).

Residues Asp-35–Asp-39, Ser-84–Leu-85, and Glu-116 each bind NAD(+). Lys-118 acts as the N6-AMP-lysine intermediate in catalysis. NAD(+) is bound by residues Arg-139, Glu-176, Lys-293, and Lys-317. 4 residues coordinate Zn(2+): Cys-411, Cys-414, Cys-429, and Cys-435. The 82-residue stretch at Asp-593–Val-674 folds into the BRCT domain.

It belongs to the NAD-dependent DNA ligase family. LigA subfamily. The cofactor is Mg(2+). Mn(2+) serves as cofactor.

The enzyme catalyses NAD(+) + (deoxyribonucleotide)n-3'-hydroxyl + 5'-phospho-(deoxyribonucleotide)m = (deoxyribonucleotide)n+m + AMP + beta-nicotinamide D-nucleotide.. In terms of biological role, DNA ligase that catalyzes the formation of phosphodiester linkages between 5'-phosphoryl and 3'-hydroxyl groups in double-stranded DNA using NAD as a coenzyme and as the energy source for the reaction. It is essential for DNA replication and repair of damaged DNA. This is DNA ligase from Saccharophagus degradans (strain 2-40 / ATCC 43961 / DSM 17024).